The chain runs to 164 residues: Phosphopantetheine adenylyltransferase (164 aa).

S10 is a binding site for substrate. Residues 10–11 (SF) and H18 contribute to the ATP site. Positions 42, 74, and 88 each coordinate substrate. ATP is bound by residues 89–91 (GLR), E99, and 124–130 (YFFVSAR).

The protein belongs to the bacterial CoaD family. Homohexamer. Requires Mg(2+) as cofactor.

The protein localises to the cytoplasm. It catalyses the reaction (R)-4'-phosphopantetheine + ATP + H(+) = 3'-dephospho-CoA + diphosphate. The protein operates within cofactor biosynthesis; coenzyme A biosynthesis; CoA from (R)-pantothenate: step 4/5. In terms of biological role, reversibly transfers an adenylyl group from ATP to 4'-phosphopantetheine, yielding dephospho-CoA (dPCoA) and pyrophosphate. This is Phosphopantetheine adenylyltransferase from Anaeromyxobacter dehalogenans (strain 2CP-C).